Reading from the N-terminus, the 312-residue chain is Ribonuclease Z (312 aa).

Zn(2+) contacts are provided by H62, H64, D66, H67, H144, D215, and H273. D66 serves as the catalytic Proton acceptor.

The protein belongs to the RNase Z family. In terms of assembly, homodimer. Zn(2+) serves as cofactor.

The catalysed reaction is Endonucleolytic cleavage of RNA, removing extra 3' nucleotides from tRNA precursor, generating 3' termini of tRNAs. A 3'-hydroxy group is left at the tRNA terminus and a 5'-phosphoryl group is left at the trailer molecule.. In terms of biological role, zinc phosphodiesterase, which displays some tRNA 3'-processing endonuclease activity. Probably involved in tRNA maturation, by removing a 3'-trailer from precursor tRNA. This chain is Ribonuclease Z, found in Prochlorococcus marinus (strain MIT 9312).